Reading from the N-terminus, the 81-residue chain is Large ribosomal subunit protein bL31B (81 aa).

It belongs to the bacterial ribosomal protein bL31 family. Type B subfamily. Part of the 50S ribosomal subunit.

This is Large ribosomal subunit protein bL31B from Pediococcus pentosaceus (strain ATCC 25745 / CCUG 21536 / LMG 10740 / 183-1w).